A 403-amino-acid polypeptide reads, in one-letter code: S-adenosylmethionine synthase (403 aa).

An ATP-binding site is contributed by His15. Asp17 contacts Mg(2+). Glu43 is a binding site for K(+). Residues Glu56 and Gln99 each coordinate L-methionine. The segment at 99–109 (QSPHIAQGVDR) is flexible loop. ATP contacts are provided by residues 166–168 (DAK), 232–233 (KF), Asp241, 247–248 (RK), Ala264, and Lys268. L-methionine is bound at residue Asp241. Lys272 serves as a coordination point for L-methionine.

This sequence belongs to the AdoMet synthase family. As to quaternary structure, homotetramer; dimer of dimers. Mg(2+) serves as cofactor. The cofactor is K(+).

The protein resides in the cytoplasm. The enzyme catalyses L-methionine + ATP + H2O = S-adenosyl-L-methionine + phosphate + diphosphate. It functions in the pathway amino-acid biosynthesis; S-adenosyl-L-methionine biosynthesis; S-adenosyl-L-methionine from L-methionine: step 1/1. Functionally, catalyzes the formation of S-adenosylmethionine (AdoMet) from methionine and ATP. The overall synthetic reaction is composed of two sequential steps, AdoMet formation and the subsequent tripolyphosphate hydrolysis which occurs prior to release of AdoMet from the enzyme. This chain is S-adenosylmethionine synthase, found in Stenotrophomonas maltophilia (strain R551-3).